Reading from the N-terminus, the 344-residue chain is Dihydroorotase (344 aa).

2 residues coordinate Zn(2+): histidine 13 and histidine 15. Residues 15 to 17 (HLR) and asparagine 41 each bind substrate. Residues lysine 98, histidine 135, and histidine 173 each contribute to the Zn(2+) site. Residue lysine 98 is modified to N6-carboxylysine. A substrate-binding site is contributed by histidine 135. Residue leucine 218 participates in substrate binding. Aspartate 247 contacts Zn(2+). Aspartate 247 is an active-site residue. The substrate site is built by histidine 251 and alanine 263.

The protein belongs to the metallo-dependent hydrolases superfamily. DHOase family. Class II DHOase subfamily. In terms of assembly, homodimer. Zn(2+) is required as a cofactor.

The enzyme catalyses (S)-dihydroorotate + H2O = N-carbamoyl-L-aspartate + H(+). It functions in the pathway pyrimidine metabolism; UMP biosynthesis via de novo pathway; (S)-dihydroorotate from bicarbonate: step 3/3. Its function is as follows. Catalyzes the reversible cyclization of carbamoyl aspartate to dihydroorotate. The protein is Dihydroorotase of Neisseria gonorrhoeae (strain NCCP11945).